We begin with the raw amino-acid sequence, 155 residues long: Crossover junction endodeoxyribonuclease RuvC (155 aa).

Residues aspartate 7, glutamate 68, and aspartate 140 contribute to the active site. 3 residues coordinate Mg(2+): aspartate 7, glutamate 68, and aspartate 140.

The protein belongs to the RuvC family. In terms of assembly, homodimer which binds Holliday junction (HJ) DNA. The HJ becomes 2-fold symmetrical on binding to RuvC with unstacked arms; it has a different conformation from HJ DNA in complex with RuvA. In the full resolvosome a probable DNA-RuvA(4)-RuvB(12)-RuvC(2) complex forms which resolves the HJ. The cofactor is Mg(2+).

The protein localises to the cytoplasm. The catalysed reaction is Endonucleolytic cleavage at a junction such as a reciprocal single-stranded crossover between two homologous DNA duplexes (Holliday junction).. Its function is as follows. The RuvA-RuvB-RuvC complex processes Holliday junction (HJ) DNA during genetic recombination and DNA repair. Endonuclease that resolves HJ intermediates. Cleaves cruciform DNA by making single-stranded nicks across the HJ at symmetrical positions within the homologous arms, yielding a 5'-phosphate and a 3'-hydroxyl group; requires a central core of homology in the junction. The consensus cleavage sequence is 5'-(A/T)TT(C/G)-3'. Cleavage occurs on the 3'-side of the TT dinucleotide at the point of strand exchange. HJ branch migration catalyzed by RuvA-RuvB allows RuvC to scan DNA until it finds its consensus sequence, where it cleaves and resolves the cruciform DNA. The protein is Crossover junction endodeoxyribonuclease RuvC of Prochlorococcus marinus (strain SARG / CCMP1375 / SS120).